Here is a 130-residue protein sequence, read N- to C-terminus: Small ribosomal subunit protein uS9 (130 aa).

The protein belongs to the universal ribosomal protein uS9 family.

The protein is Small ribosomal subunit protein uS9 of Pseudomonas fluorescens (strain ATCC BAA-477 / NRRL B-23932 / Pf-5).